Here is a 370-residue protein sequence, read N- to C-terminus: MSDLYNEGTEELLLNMGPQHPSMHGVFRMVVRLQGETVTGIEPKIGYLHRGLEKIAESRTYPQFIPYTDRLDYLASPHNNLAYVQTVEKLMGLEIPERAEYLRIILAELARFASHQVFIASAALDMAGWTAWGYPFRDRERILDLFEMMSGSRLTVNCMRIGGVSAEPPAEFWPALESFLDDMPEKLEEYFNIYMGNEIAQARMKKVGILSKEVAENLCITGPALRASGVQYDVRKAEPYGIYDRFDFEVPVLYGCDTYDRNLIRFMEMNESLKIIRQAVRDIPEGPIMAKVPKIIKPPAGEVYHRVENPKGELGFYIVSNGTPKPERVKIRAGAFVNLQCLNEIGVGTYIQDLIASFASLDAVLGEVDK.

Belongs to the complex I 49 kDa subunit family. As to quaternary structure, NDH-1 is composed of 14 different subunits. Subunits NuoB, C, D, E, F, and G constitute the peripheral sector of the complex.

Its subcellular location is the cell membrane. The catalysed reaction is a quinone + NADH + 5 H(+)(in) = a quinol + NAD(+) + 4 H(+)(out). NDH-1 shuttles electrons from NADH, via FMN and iron-sulfur (Fe-S) centers, to quinones in the respiratory chain. The immediate electron acceptor for the enzyme in this species is believed to be a menaquinone. Couples the redox reaction to proton translocation (for every two electrons transferred, four hydrogen ions are translocated across the cytoplasmic membrane), and thus conserves the redox energy in a proton gradient. In Desulfitobacterium hafniense (strain Y51), this protein is NADH-quinone oxidoreductase subunit D.